The chain runs to 370 residues: MKPTRVPNNPCFSSGPCAKHPGYSIEELKDTPFGRSHRSNLGKEKLAEAIKKTRDMLGLPDDYLVGIVPASDTGAFEMCLWSMLGCRGVDVLVWESFSKGWATDITKQLKLKDVRVFEAEYGKLPDLKKVDFKNDVVFVWNGTTSGVKVPNGDWIPENREGLTLCDATSAIFAMDIPYHKLDVITFSWQKVLGGEGAHGMLILSPRAVQRLESYTPAWPLPKIFRLTKGGKLNKKIFEGSTINTPSMLANEDWLATLKWAESVGGLKPLIQRTNDNLAVFEAFVAKNNWIHFLAETKEIRSSTSVCFKVDLSDEKLKELIKTLEKEKVAYDIGSYRDAPSGLRIWCGATVEKEDLQCLCEWIEWAYNLVK.

Residue Arg38 participates in L-glutamate binding. Positions 101, 143, 166, and 189 each coordinate pyridoxal 5'-phosphate. At Lys190 the chain carries N6-(pyridoxal phosphate)lysine. 243-244 (NT) serves as a coordination point for pyridoxal 5'-phosphate.

It belongs to the class-V pyridoxal-phosphate-dependent aminotransferase family. SerC subfamily. In terms of assembly, homodimer. Pyridoxal 5'-phosphate is required as a cofactor.

The protein resides in the cytoplasm. The enzyme catalyses O-phospho-L-serine + 2-oxoglutarate = 3-phosphooxypyruvate + L-glutamate. The catalysed reaction is 4-(phosphooxy)-L-threonine + 2-oxoglutarate = (R)-3-hydroxy-2-oxo-4-phosphooxybutanoate + L-glutamate. It participates in amino-acid biosynthesis; L-serine biosynthesis; L-serine from 3-phospho-D-glycerate: step 2/3. Its pathway is cofactor biosynthesis; pyridoxine 5'-phosphate biosynthesis; pyridoxine 5'-phosphate from D-erythrose 4-phosphate: step 3/5. Functionally, catalyzes the reversible conversion of 3-phosphohydroxypyruvate to phosphoserine and of 3-hydroxy-2-oxo-4-phosphonooxybutanoate to phosphohydroxythreonine. The protein is Phosphoserine aminotransferase (serC) of Methanosarcina barkeri (strain Fusaro / DSM 804).